A 243-amino-acid chain; its full sequence is Cell division protein FtsQ (243 aa).

Residues 1-19 (MKRYNAKRKTHRNLKSIKK) lie on the Cytoplasmic side of the membrane. A helical membrane pass occupies residues 20–40 (LIPTVLALLAFVSLLAGIITL). Over 41–243 (HNPKTLPFRQ…SNGLAIQWKN (203 aa)) the chain is Periplasmic. Residues 46–115 (LPFRQIKITV…NELEIQVEEQ (70 aa)) enclose the POTRA domain.

This sequence belongs to the FtsQ/DivIB family. FtsQ subfamily. As to quaternary structure, part of a complex composed of FtsB, FtsL and FtsQ.

The protein localises to the cell inner membrane. Essential cell division protein. May link together the upstream cell division proteins, which are predominantly cytoplasmic, with the downstream cell division proteins, which are predominantly periplasmic. May control correct divisome assembly. The polypeptide is Cell division protein FtsQ (Coxiella burnetii (strain RSA 493 / Nine Mile phase I)).